The sequence spans 179 residues: Large ribosomal subunit protein uL5 (179 aa).

Belongs to the universal ribosomal protein uL5 family. In terms of assembly, part of the 50S ribosomal subunit; part of the 5S rRNA/L5/L18/L25 subcomplex. Contacts the 5S rRNA and the P site tRNA. Forms a bridge to the 30S subunit in the 70S ribosome.

This is one of the proteins that bind and probably mediate the attachment of the 5S RNA into the large ribosomal subunit, where it forms part of the central protuberance. In the 70S ribosome it contacts protein S13 of the 30S subunit (bridge B1b), connecting the 2 subunits; this bridge is implicated in subunit movement. Contacts the P site tRNA; the 5S rRNA and some of its associated proteins might help stabilize positioning of ribosome-bound tRNAs. This chain is Large ribosomal subunit protein uL5, found in Shewanella pealeana (strain ATCC 700345 / ANG-SQ1).